Reading from the N-terminus, the 243-residue chain is UPF0246 protein spyM18_2163 (243 aa).

This sequence belongs to the UPF0246 family.

In Streptococcus pyogenes serotype M18 (strain MGAS8232), this protein is UPF0246 protein spyM18_2163.